Here is a 65-residue protein sequence, read N- to C-terminus: Large ribosomal subunit protein bL35 (65 aa).

The disordered stretch occupies residues 1-46 (MPKIKTNRGAAKRFKPTGSGGFKRAQSHRRHILTKKSTKRKRHLRS). Positions 25–45 (AQSHRRHILTKKSTKRKRHLR) are enriched in basic residues.

It belongs to the bacterial ribosomal protein bL35 family.

In Thioalkalivibrio sulfidiphilus (strain HL-EbGR7), this protein is Large ribosomal subunit protein bL35.